The sequence spans 263 residues: 5'-nucleotidase SurE (263 aa).

Asp-8, Asp-9, Ser-43, and Asn-96 together coordinate a divalent metal cation.

This sequence belongs to the SurE nucleotidase family. It depends on a divalent metal cation as a cofactor.

The protein localises to the cytoplasm. It catalyses the reaction a ribonucleoside 5'-phosphate + H2O = a ribonucleoside + phosphate. Functionally, nucleotidase that shows phosphatase activity on nucleoside 5'-monophosphates. The polypeptide is 5'-nucleotidase SurE (Jannaschia sp. (strain CCS1)).